We begin with the raw amino-acid sequence, 890 residues long: Bacteriocin BCN5 (890 aa).

2 consecutive SH3b domains span residues 22–84 (PPNA…TNAT) and 179–241 (ENNA…TNAT). Residues 303–549 (GYVKYEGAAA…RYLQKIINAV (247 aa)) form the Peptidase M14 domain. 3 residues coordinate Zn(2+): His-358, Glu-361, and His-475. Catalysis depends on Glu-525, which acts as the Proton donor/acceptor. The SH3b 3 domain maps to 572–636 (EATGEVINVQ…VNSGYIIILK (65 aa)). The interval 815 to 869 (KALAAAVIVNGVETMFCAFLGGFIAQCIAPEFPIVAAVAGAIVSAIAAFAIGYFV) is hydrophobic.

The cofactor is Zn(2+).

May function as an ionophore. In Clostridium perfringens, this protein is Bacteriocin BCN5 (bcn).